Consider the following 54-residue polypeptide: uncharacterized protein (54 aa).

The N-terminal stretch at M1–A21 is a signal peptide. The Extracellular portion of the chain corresponds to G22–T29. The helical transmembrane segment at I30–I50 threads the bilayer. The Cytoplasmic portion of the chain corresponds to S51–K54.

The protein localises to the membrane. This is an uncharacterized protein from Dictyostelium discoideum (Social amoeba).